Consider the following 478-residue polypeptide: Proline--tRNA ligase (478 aa).

This sequence belongs to the class-II aminoacyl-tRNA synthetase family. ProS type 3 subfamily. In terms of assembly, homodimer.

It localises to the cytoplasm. It catalyses the reaction tRNA(Pro) + L-proline + ATP = L-prolyl-tRNA(Pro) + AMP + diphosphate. Functionally, catalyzes the attachment of proline to tRNA(Pro) in a two-step reaction: proline is first activated by ATP to form Pro-AMP and then transferred to the acceptor end of tRNA(Pro). This is Proline--tRNA ligase from Clostridium botulinum (strain 657 / Type Ba4).